The chain runs to 159 residues: IQ domain-containing protein J (159 aa).

An IQ domain is found at 47-67 (ESKVKIIQRAWREYLQRQEPL). The segment at 63–88 (RQEPLGKRSPSPPSVSSEKLSSSVSM) is disordered. Residues 76–87 (SVSSEKLSSSVS) show a composition bias toward low complexity.

The sequence is that of IQ domain-containing protein J from Homo sapiens (Human).